The following is a 226-amino-acid chain: PKHD-type hydroxylase Pfl01_0799 (226 aa).

Positions 78-178 (KVFPPLLNCY…RYASFFWTQS (101 aa)) constitute a Fe2OG dioxygenase domain. Residues H96, D98, and H159 each contribute to the Fe cation site. R169 provides a ligand contact to 2-oxoglutarate.

Fe(2+) is required as a cofactor. Requires L-ascorbate as cofactor.

The polypeptide is PKHD-type hydroxylase Pfl01_0799 (Pseudomonas fluorescens (strain Pf0-1)).